Reading from the N-terminus, the 257-residue chain is Hydroxyacylglutathione hydrolase (257 aa).

The Zn(2+) site is built by H54, H56, D58, H59, H113, D137, and H175.

This sequence belongs to the metallo-beta-lactamase superfamily. Glyoxalase II family. As to quaternary structure, monomer. Zn(2+) is required as a cofactor.

The enzyme catalyses an S-(2-hydroxyacyl)glutathione + H2O = a 2-hydroxy carboxylate + glutathione + H(+). It participates in secondary metabolite metabolism; methylglyoxal degradation; (R)-lactate from methylglyoxal: step 2/2. Its function is as follows. Thiolesterase that catalyzes the hydrolysis of S-D-lactoyl-glutathione to form glutathione and D-lactic acid. The chain is Hydroxyacylglutathione hydrolase from Gloeothece citriformis (strain PCC 7424) (Cyanothece sp. (strain PCC 7424)).